We begin with the raw amino-acid sequence, 148 residues long: Putative nickel-responsive regulator (148 aa).

4 residues coordinate Ni(2+): His88, His99, His101, and Cys107.

It belongs to the transcriptional regulatory CopG/NikR family. Ni(2+) is required as a cofactor.

Transcriptional regulator. The sequence is that of Putative nickel-responsive regulator from Helicobacter acinonychis (strain Sheeba).